A 1109-amino-acid polypeptide reads, in one-letter code: Coiled-coil domain-containing protein 158 (1109 aa).

Residues 1 to 12 (MESKACESKNED) are compositionally biased toward basic and acidic residues. Positions 1 to 31 (MESKACESKNEDLLPSGITSKGGSSSPFFVT) are disordered. Over residues 17–31 (GITSKGGSSSPFFVT) the composition is skewed to polar residues. 2 coiled-coil regions span residues 71-166 (GKEH…MLKD) and 242-828 (VEDQ…QEQE). Disordered regions lie at residues 843–897 (LQGP…DPTR) and 952–1061 (HRSN…TGKT). Polar residues-rich tracts occupy residues 862-882 (ASVT…SFLS), 953-970 (RSNN…SSET), and 988-998 (SCFTFTSTASP). The span at 999 to 1019 (SGKMSASRSFSSSPKKSPVHS) shows a compositional bias: low complexity. Polar residues-rich tracts occupy residues 1020–1037 (LLTS…QYRS) and 1043–1061 (SPTS…TGKT). A coiled-coil region spans residues 1053–1109 (PSLETTGKTCQKLQNRLESLQTLVEDLQLKNQAMSSMIRNQEKRIQKVKDQEKMLLK).

This chain is Coiled-coil domain-containing protein 158 (Ccdc158), found in Mus musculus (Mouse).